Consider the following 502-residue polypeptide: Glycerol kinase (502 aa).

Threonine 12 serves as a coordination point for ADP. Threonine 12, threonine 13, and serine 14 together coordinate ATP. Threonine 12 lines the sn-glycerol 3-phosphate pocket. Residue arginine 16 coordinates ADP. The sn-glycerol 3-phosphate site is built by arginine 82, glutamate 83, tyrosine 134, and aspartate 243. Residues arginine 82, glutamate 83, tyrosine 134, aspartate 243, and glutamine 244 each coordinate glycerol. ADP is bound by residues threonine 265 and glycine 308. ATP-binding residues include threonine 265, glycine 308, glutamine 312, and glycine 412. Glycine 412 is a binding site for ADP.

It belongs to the FGGY kinase family.

The enzyme catalyses glycerol + ATP = sn-glycerol 3-phosphate + ADP + H(+). Its pathway is polyol metabolism; glycerol degradation via glycerol kinase pathway; sn-glycerol 3-phosphate from glycerol: step 1/1. With respect to regulation, inhibited by fructose 1,6-bisphosphate (FBP). Key enzyme in the regulation of glycerol uptake and metabolism. Catalyzes the phosphorylation of glycerol to yield sn-glycerol 3-phosphate. This is Glycerol kinase from Methylobacterium nodulans (strain LMG 21967 / CNCM I-2342 / ORS 2060).